Reading from the N-terminus, the 176-residue chain is NAD(P)H-quinone oxidoreductase subunit 6, chloroplastic (176 aa).

Helical transmembrane passes span I10–T30, T32–L52, A61–M81, I92–I112, and F152–A172.

Belongs to the complex I subunit 6 family. NDH is composed of at least 16 different subunits, 5 of which are encoded in the nucleus.

It localises to the plastid. The protein localises to the chloroplast thylakoid membrane. It carries out the reaction a plastoquinone + NADH + (n+1) H(+)(in) = a plastoquinol + NAD(+) + n H(+)(out). It catalyses the reaction a plastoquinone + NADPH + (n+1) H(+)(in) = a plastoquinol + NADP(+) + n H(+)(out). NDH shuttles electrons from NAD(P)H:plastoquinone, via FMN and iron-sulfur (Fe-S) centers, to quinones in the photosynthetic chain and possibly in a chloroplast respiratory chain. The immediate electron acceptor for the enzyme in this species is believed to be plastoquinone. Couples the redox reaction to proton translocation, and thus conserves the redox energy in a proton gradient. This Piper cenocladum (Ant piper) protein is NAD(P)H-quinone oxidoreductase subunit 6, chloroplastic (ndhG).